Consider the following 159-residue polypeptide: uncharacterized protein (159 aa).

A compositionally biased stretch (basic and acidic residues) spans 1-13 (MESRPSGRQHASE). Residues 1–35 (MESRPSGRQHASEGDGDQSPTQCAGMRSSGRSDQP) are disordered.

This is an uncharacterized protein from Homo sapiens (Human).